A 515-amino-acid chain; its full sequence is MIILKKQHDTIIVLDFGSQYNQLIARRIREFGVYSELHPHTITAEEIKAMNPKGIIFSGGPNSVYGEGALHCDEKIFELGLPIFGICYGMQLMTQQFGGKVERANHREYGKAVLKVENESKLYANLPEEQVVWMSHGDLVTGLPEGFVVDATSESCPIAGMSNEAKNLYGVQFHPEVRHSEHGNDLIKNFVFGVCGCSEGWNMENFIEVELEKIRETVGDKKVLCALSGGVDSSVVAVLIHKAIGDQLTCIFVDHGLLRKGEAEGVMKTFSEGFHMNVIKVDARDRFMDKLKGVEDPEQKRKIIGNEFIYVFDDEASKLQGMDFLAQGTLYTDIVESGTATAQTIKSHHNVGGLPEDMQFKLIEPLNTLFKDEVRVLGSELGIPDEIVWRQPFPGPGLGIRVLGEITEEKLEIVRESDAILREEIIKAGLDREIWQYFTALPGMRSVGVMGDERTYDYTVGIRAVTSIDGMTADWARIPWDVLEKISVRIVNEVKHVNRIVYDVTSKPPATIEWE.

The Glutamine amidotransferase type-1 domain maps to 10 to 200 (TIIVLDFGSQ…VFGVCGCSEG (191 aa)). The active-site Nucleophile is the cysteine 87. Catalysis depends on residues histidine 174 and glutamate 176. Positions 201-390 (WNMENFIEVE…LGIPDEIVWR (190 aa)) constitute a GMPS ATP-PPase domain. 228-234 (SGGVDSS) provides a ligand contact to ATP.

Homodimer.

It carries out the reaction XMP + L-glutamine + ATP + H2O = GMP + L-glutamate + AMP + diphosphate + 2 H(+). It functions in the pathway purine metabolism; GMP biosynthesis; GMP from XMP (L-Gln route): step 1/1. Catalyzes the synthesis of GMP from XMP. This is GMP synthase [glutamine-hydrolyzing] from Bacillus cereus (strain ATCC 14579 / DSM 31 / CCUG 7414 / JCM 2152 / NBRC 15305 / NCIMB 9373 / NCTC 2599 / NRRL B-3711).